The following is a 120-amino-acid chain: Dihydroneopterin triphosphate 2'-epimerase (120 aa).

The protein belongs to the DHNA family. As to quaternary structure, homooctamer.

The enzyme catalyses 7,8-dihydroneopterin 3'-triphosphate = 7,8-dihydromonapterin 3'-triphosphate. Catalyzes the epimerization of carbon 2' of the side chain of 7,8-dihydroneopterin triphosphate (H2NTP) to form 7,8-dihydromonapterin triphosphate (H2MTP). Is required for tetrahydromonapterin biosynthesis. The sequence is that of Dihydroneopterin triphosphate 2'-epimerase (folX) from Escherichia coli O157:H7.